The sequence spans 237 residues: Ribosomal RNA small subunit methyltransferase G (237 aa).

S-adenosyl-L-methionine is bound by residues Gly-78, Phe-83, 129–130 (AE), and Arg-148.

Belongs to the methyltransferase superfamily. RNA methyltransferase RsmG family.

It localises to the cytoplasm. Its function is as follows. Specifically methylates the N7 position of a guanine in 16S rRNA. The chain is Ribosomal RNA small subunit methyltransferase G from Streptococcus pyogenes serotype M12 (strain MGAS9429).